The sequence spans 55 residues: ATP synthase small subunit 6-A, mitochondrial (55 aa).

A mitochondrion-targeting transit peptide spans 1 to 11; sequence MRLFDPWPVFF. A helical membrane pass occupies residues 21-39; the sequence is FLTGFAVTGVLITKLTAGL.

Belongs to the ATPase 6 subunit family.

The protein resides in the mitochondrion inner membrane. In terms of biological role, mitochondrial membrane ATP synthase (F(1)F(0) ATP synthase or Complex V) produces ATP from ADP in the presence of a proton gradient across the membrane which is generated by electron transport complexes of the respiratory chain. F-type ATPases consist of two structural domains, F(1) - containing the extramembraneous catalytic core and F(0) - containing the membrane proton channel, linked together by a central stalk and a peripheral stalk. During catalysis, ATP synthesis in the catalytic domain of F(1) is coupled via a rotary mechanism of the central stalk subunits to proton translocation. Part of the complex F(0) domain. Confers tolerance to several abiotic stresses (e.g. salt, mannitol, drought, oxidative and cold stresses), probably by providing additional energy needed for cell homeostasis. This chain is ATP synthase small subunit 6-A, mitochondrial, found in Arabidopsis thaliana (Mouse-ear cress).